The primary structure comprises 487 residues: 3-octaprenyl-4-hydroxybenzoate carboxy-lyase (487 aa).

N172 contributes to the Mn(2+) binding site. Residues 175–177 (IYR), 189–191 (RWL), and 194–195 (RG) contribute to the prenylated FMN site. Position 238 (E238) interacts with Mn(2+). D287 functions as the Proton donor in the catalytic mechanism.

It belongs to the UbiD family. Homohexamer. It depends on prenylated FMN as a cofactor. Mn(2+) is required as a cofactor.

It localises to the cell membrane. The catalysed reaction is a 4-hydroxy-3-(all-trans-polyprenyl)benzoate + H(+) = a 2-(all-trans-polyprenyl)phenol + CO2. The protein operates within cofactor biosynthesis; ubiquinone biosynthesis. Functionally, catalyzes the decarboxylation of 3-octaprenyl-4-hydroxy benzoate to 2-octaprenylphenol, an intermediate step in ubiquinone biosynthesis. The polypeptide is 3-octaprenyl-4-hydroxybenzoate carboxy-lyase (Nitrosococcus oceani (strain ATCC 19707 / BCRC 17464 / JCM 30415 / NCIMB 11848 / C-107)).